We begin with the raw amino-acid sequence, 308 residues long: Protoheme IX farnesyltransferase (308 aa).

The next 8 helical transmembrane spans lie at 31 to 51 (VIEL…RGTV), 53 to 73 (PLLI…ANTL), 102 to 122 (HALI…WLST), 124 to 144 (LLSG…YTML), 149 to 169 (TSQN…IGWS), 170 to 190 (AVTG…FFWT), 242 to 262 (LATG…FLVM), and 288 to 308 (YLAV…PTLL).

The protein belongs to the UbiA prenyltransferase family. Protoheme IX farnesyltransferase subfamily.

The protein resides in the cell membrane. The catalysed reaction is heme b + (2E,6E)-farnesyl diphosphate + H2O = Fe(II)-heme o + diphosphate. It participates in porphyrin-containing compound metabolism; heme O biosynthesis; heme O from protoheme: step 1/1. In terms of biological role, converts heme B (protoheme IX) to heme O by substitution of the vinyl group on carbon 2 of heme B porphyrin ring with a hydroxyethyl farnesyl side group. The sequence is that of Protoheme IX farnesyltransferase from Mycolicibacterium smegmatis (strain ATCC 700084 / mc(2)155) (Mycobacterium smegmatis).